Reading from the N-terminus, the 147-residue chain is Helix-loop-helix protein 13 (147 aa).

In terms of domain architecture, bHLH spans 41 to 93 (EERQTASIRERKRMCSINVAFIELRNYIPTFPYEKRLSKIDTLNLAIAYINML).

In terms of tissue distribution, expressed in hermaphrodite dopaminergic neurons (ADE, CEP, and PDE).

It is found in the nucleus. The protein localises to the cytoplasm. Functionally, transcriptional activator. Shown to have a role in the negative regulation of exit from L1 arrest and dauer diapause dependent on IIS signaling (insulin and insulin-like growth factor (IGF) signaling). Hypodermal expression is regulated by IIS/daf-16 while neuronal expression is not under the control of IIS/daf-16. This is Helix-loop-helix protein 13 from Caenorhabditis elegans.